The following is a 1503-amino-acid chain: Lysophospholipase NTE1 (1503 aa).

The Cytoplasmic segment spans residues 1–25 (MDSSTAALATASAKLDAVAQQGSSS). Residues 26 to 46 (WIGFFANIILGIISLVYSILY) traverse the membrane as a helical segment. Residues 47-71 (SVLKLTTFSIPSLLYTLFSTSLTVT) are Lumenal-facing. A helical transmembrane segment spans residues 72 to 92 (MNATTLMLIIVLVFSLVSWFV). Residues 93-1503 (RYRYLNMYSR…RTMAPRRASI (1411 aa)) are Cytoplasmic-facing. Disordered regions lie at residues 252-348 (RHGG…TTSV), 454-561 (TKGI…SNPF), and 722-745 (KNES…RFMD). 6 stretches are compositionally biased toward polar residues: residues 262–272 (TSATETYTSSR), 285–302 (STVS…SSHG), 487–496 (QRPSSVTASP), 506–542 (KHTS…STLL), 552–561 (PLSQRTSNPF), and 723–737 (NESS…QQGS). A nucleoside 3',5'-cyclic phosphate-binding positions include 658–777 (GLPV…GYVG) and 821–941 (RLTN…IASR). In terms of domain architecture, PNPLA spans 1200–1364 (LVLGGGGARG…IDNLTVSHMK (165 aa)). The GXGXXG signature appears at 1204-1209 (GGGARG). Positions 1231 to 1235 (GTSIG) match the GXSXG motif. Ser1233 functions as the Nucleophile in the catalytic mechanism. The active-site Proton acceptor is Asp1351. A DGA/G motif is present at residues 1351 to 1353 (DGG).

The protein belongs to the NTE family.

It is found in the endoplasmic reticulum membrane. The enzyme catalyses a 1-acyl-sn-glycero-3-phosphocholine + H2O = sn-glycerol 3-phosphocholine + a fatty acid + H(+). Its activity is regulated as follows. Inhibited by organophosphorus esters. Functionally, intracellular phospholipase B that catalyzes the double deacylation of phosphatidylcholine (PC) to glycerophosphocholine (GroPCho). Plays an important role in membrane lipid homeostasis. Responsible for the rapid PC turnover in response to inositol, elevated temperatures, or when choline is present in the growth medium. The sequence is that of Lysophospholipase NTE1 (NTE1) from Pyricularia oryzae (strain 70-15 / ATCC MYA-4617 / FGSC 8958) (Rice blast fungus).